We begin with the raw amino-acid sequence, 45 residues long: Photosystem II reaction center protein K (45 aa).

Residues methionine 1–alanine 8 constitute a propeptide that is removed on maturation. Residues leucine 24–phenylalanine 44 traverse the membrane as a helical segment.

Belongs to the PsbK family. PSII is composed of 1 copy each of membrane proteins PsbA, PsbB, PsbC, PsbD, PsbE, PsbF, PsbH, PsbI, PsbJ, PsbK, PsbL, PsbM, PsbT, PsbX, PsbY, PsbZ, Psb30/Ycf12, peripheral proteins PsbO, CyanoQ (PsbQ), PsbU, PsbV and a large number of cofactors. It forms dimeric complexes.

It localises to the cellular thylakoid membrane. Functionally, one of the components of the core complex of photosystem II (PSII). PSII is a light-driven water:plastoquinone oxidoreductase that uses light energy to abstract electrons from H(2)O, generating O(2) and a proton gradient subsequently used for ATP formation. It consists of a core antenna complex that captures photons, and an electron transfer chain that converts photonic excitation into a charge separation. The sequence is that of Photosystem II reaction center protein K from Trichodesmium erythraeum (strain IMS101).